A 270-amino-acid polypeptide reads, in one-letter code: MNLAPSTCLLLLFLLDIAQALPVWDEEGHEEGHEEGDGDDFVDITTRILTSNNNTDQLLLEGDLVAPTNRNAMKCWSSSCFWKKASNGLVVIPYVISSEYSGGEVATIEGAMRAFNGKTCIRFVRRTNEYDFISVVSKTGCYSELGRKGGQQELSINRGGCMYSGIIQHELNHALGFQHEQTRSDRDSYVRINWENIIPASAYNFNKHDTNNLNTPYDYSSIMHYGRDAFSIAYGRDSITPIPNPNVPIGQRNGMSRWDITRINVLYNCR.

An N-terminal signal peptide occupies residues 1 to 20; the sequence is MNLAPSTCLLLLFLLDIAQA. Residues 21–70 constitute a propeptide, activation peptide; it reads LPVWDEEGHEEGHEEGDGDDFVDITTRILTSNNNTDQLLLEGDLVAPTNR. Asparagine 53 carries an N-linked (GlcNAc...) asparagine glycan. In terms of domain architecture, Peptidase M12A spans 71–270; that stretch reads NAMKCWSSSC…TRINVLYNCR (200 aa). Disulfide bonds link cysteine 75–cysteine 80, cysteine 120–cysteine 269, and cysteine 141–cysteine 161. Histidine 169 provides a ligand contact to Zn(2+). The active site involves glutamate 170. Zn(2+) contacts are provided by histidine 173 and histidine 179.

Zn(2+) is required as a cofactor.

The protein localises to the zymogen granule. It carries out the reaction Hydrolysis of the inner layer of fish egg envelope. Also hydrolysis of casein and small molecule substrates such as succinyl-Leu-Leu-Val-Tyr-|-7-(4-methyl)coumarylamide.. Its function is as follows. Participates in the breakdown of the egg envelope, which is derived from the egg extracellular matrix, at the time of hatching. Thus allowing the newly hatched fish to swim free. HCE binds tightly to the egg envelope while it exerts the choriolytic swelling action. This is High choriolytic enzyme 1 (hcea) from Oryzias latipes (Japanese rice fish).